A 160-amino-acid chain; its full sequence is Large ribosomal subunit protein eL21 (160 aa).

The protein belongs to the eukaryotic ribosomal protein eL21 family. Component of the large ribosomal subunit. Mature ribosomes consist of a small (40S) and a large (60S) subunit. The 40S subunit contains about 32 different proteins and 1 molecule of RNA (18S). The 60S subunit contains 45 different proteins and 3 molecules of RNA (25S, 5.8S and 5S).

It localises to the cytoplasm. Functionally, component of the ribosome, a large ribonucleoprotein complex responsible for the synthesis of proteins in the cell. The small ribosomal subunit (SSU) binds messenger RNAs (mRNAs) and translates the encoded message by selecting cognate aminoacyl-transfer RNA (tRNA) molecules. The large subunit (LSU) contains the ribosomal catalytic site termed the peptidyl transferase center (PTC), which catalyzes the formation of peptide bonds, thereby polymerizing the amino acids delivered by tRNAs into a polypeptide chain. The nascent polypeptides leave the ribosome through a tunnel in the LSU and interact with protein factors that function in enzymatic processing, targeting, and the membrane insertion of nascent chains at the exit of the ribosomal tunnel. The polypeptide is Large ribosomal subunit protein eL21 (Candida albicans (strain SC5314 / ATCC MYA-2876) (Yeast)).